The following is a 492-amino-acid chain: Alpha/beta hydrolase ucsC (492 aa).

Residue Ser258 is the Nucleophile of the active site.

The protein belongs to the AB hydrolase superfamily. FUS2 hydrolase family. As to quaternary structure, homodimer.

Its pathway is mycotoxin biosynthesis. Alpha/beta hydrolase; part of the gene cluster that mediates the biosynthesis of UCS1025A, a member of the pyrrolizidinone family that acts as a strong telomerase inhibitor and displays potent antibacterial and antitumor properties. These compounds share a hemiaminal-containing pyrrolizidinone core fused with a gamma-lactone, giving a furopyrrolizidine that is connected to a decalin fragment. The polyketide synthase module (PKS) of the PKS-NRPS ucsA is responsible for the synthesis of the polyketide backbone via the condensation of an acetyl-CoA starter unit with 6 malonyl-CoA units. The downstream nonribosomal peptide synthetase (NRPS) module then amidates the carboxyl end of the polyketide with a 2S,3S-methylproline derived from L-isoleucine by the 2-oxoglutarate-dependent dioxygenase ucsF which converts L-isoleucine to (4S,5S)-4-methylpyrroline-5-carboxylate that is further converted to 2S,3S-methylproline by the pyrroline-5-carboxylate reductase ucsG. Reductive release of the completed aminoacyl polyketide from the assembly line can form the 3-pyrrolin-2-one structure via an intramolecular Knoevenagel reaction. Because ucsA lacks a designated enoylreductase (ER) domain, the required activity is provided the enoyl reductase ucsL. This keto acyclic precursor is the substrate of the Diels-Alderase ucsH, that catalyzes the Diels-Alder cycloaddition. Oxidation of the 3S-methyl group to a carboxylate by the cytochrome P450 monooxygenase ucsK allows an oxa-Michael cyclization that might involve the reductase/dehydrogenase ucsI and which furnishes the furopyrrolizidine. The oxidase ucsJ likely plays a critical role in stereoselective reduction of the C5-C6 double bond to afford the required R-configured carboxylate group. Further enolization and oxidation at C5 by an unidentified enzyme affords the last intermediate that can undergo oxa-Michael cyclization to yield UCS1025A. The polypeptide is Alpha/beta hydrolase ucsC (Acremonium sp).